The primary structure comprises 425 residues: Serine--tRNA ligase (425 aa).

230–232 (TAE) contacts L-serine. 261–263 (RSE) contributes to the ATP binding site. Position 284 (Glu-284) interacts with L-serine. 348–351 (EISS) is an ATP binding site. Ser-384 is an L-serine binding site.

The protein belongs to the class-II aminoacyl-tRNA synthetase family. Type-1 seryl-tRNA synthetase subfamily. In terms of assembly, homodimer. The tRNA molecule binds across the dimer.

The protein resides in the cytoplasm. It carries out the reaction tRNA(Ser) + L-serine + ATP = L-seryl-tRNA(Ser) + AMP + diphosphate + H(+). The enzyme catalyses tRNA(Sec) + L-serine + ATP = L-seryl-tRNA(Sec) + AMP + diphosphate + H(+). It participates in aminoacyl-tRNA biosynthesis; selenocysteinyl-tRNA(Sec) biosynthesis; L-seryl-tRNA(Sec) from L-serine and tRNA(Sec): step 1/1. Its function is as follows. Catalyzes the attachment of serine to tRNA(Ser). Is also able to aminoacylate tRNA(Sec) with serine, to form the misacylated tRNA L-seryl-tRNA(Sec), which will be further converted into selenocysteinyl-tRNA(Sec). The protein is Serine--tRNA ligase of Streptococcus gordonii (strain Challis / ATCC 35105 / BCRC 15272 / CH1 / DL1 / V288).